We begin with the raw amino-acid sequence, 613 residues long: Dihydroxy-acid dehydratase (613 aa).

Position 81 (Asp-81) interacts with Mg(2+). Cys-122 provides a ligand contact to [2Fe-2S] cluster. Mg(2+) contacts are provided by Asp-123 and Lys-124. Lys-124 is subject to N6-carboxylysine. Cys-195 contacts [2Fe-2S] cluster. Residue Glu-491 participates in Mg(2+) binding. Residue Ser-517 is the Proton acceptor of the active site.

The protein belongs to the IlvD/Edd family. As to quaternary structure, homodimer. Requires [2Fe-2S] cluster as cofactor. It depends on Mg(2+) as a cofactor.

It carries out the reaction (2R)-2,3-dihydroxy-3-methylbutanoate = 3-methyl-2-oxobutanoate + H2O. The enzyme catalyses (2R,3R)-2,3-dihydroxy-3-methylpentanoate = (S)-3-methyl-2-oxopentanoate + H2O. It functions in the pathway amino-acid biosynthesis; L-isoleucine biosynthesis; L-isoleucine from 2-oxobutanoate: step 3/4. The protein operates within amino-acid biosynthesis; L-valine biosynthesis; L-valine from pyruvate: step 3/4. Its function is as follows. Functions in the biosynthesis of branched-chain amino acids. Catalyzes the dehydration of (2R,3R)-2,3-dihydroxy-3-methylpentanoate (2,3-dihydroxy-3-methylvalerate) into 2-oxo-3-methylpentanoate (2-oxo-3-methylvalerate) and of (2R)-2,3-dihydroxy-3-methylbutanoate (2,3-dihydroxyisovalerate) into 2-oxo-3-methylbutanoate (2-oxoisovalerate), the penultimate precursor to L-isoleucine and L-valine, respectively. This is Dihydroxy-acid dehydratase from Vibrio vulnificus (strain CMCP6).